The chain runs to 687 residues: Acetolactate synthase catalytic subunit, mitochondrial (687 aa).

A mitochondrion-targeting transit peptide spans Met-1–Val-90. Positions Tyr-43–Ser-52 are enriched in low complexity. Residues Tyr-43–Gln-68 are disordered. Glu-139 serves as a coordination point for thiamine diphosphate. FAD is bound by residues Arg-241, His-355–Arg-376, and Glu-407–Asp-426. Residues Gln-499–Glu-579 form a thiamine pyrophosphate binding region. Mg(2+) is bound by residues Asp-550, Asn-577, and Glu-579.

Belongs to the TPP enzyme family. In terms of assembly, homodimer. The acetolactate synthase complex contains the catalytic subunit ILV2 and the regulatory small subunit ILV6. It depends on Mg(2+) as a cofactor. Thiamine diphosphate is required as a cofactor.

The protein resides in the mitochondrion. It catalyses the reaction 2 pyruvate + H(+) = (2S)-2-acetolactate + CO2. It carries out the reaction 2-oxobutanoate + pyruvate + H(+) = (S)-2-ethyl-2-hydroxy-3-oxobutanoate + CO2. Its pathway is amino-acid biosynthesis; L-isoleucine biosynthesis; L-isoleucine from 2-oxobutanoate: step 1/4. It participates in amino-acid biosynthesis; L-valine biosynthesis; L-valine from pyruvate: step 1/4. Its activity is regulated as follows. The regulatory subunit ILV6 stimulates enzymatic activity seven- to tenfold and confers sensitivity to inhibition by valine and activation by ATP. Functionally, catalytic subunit of mitochondrial acetolactate synthase, which catalyzes the first of a series of common steps in the biosynthesis of the branched-chain amino acids. Catalyzes the irreversible decarboxylation of pyruvate to a bound hydroxyethyl group that then condenses with either a second pyruvate molecule to form 2-acetolactate (AL) or with 2-ketobutyrate to form 2-aceto-2-hydroxybutyrate (AHB). The first product is the precursor for valine and leucine biosynthesis, while the second leads to isoleucine. The protein is Acetolactate synthase catalytic subunit, mitochondrial (ILV2) of Saccharomyces cerevisiae (strain ATCC 204508 / S288c) (Baker's yeast).